The chain runs to 492 residues: Protein nucleotidyltransferase YdiU (492 aa).

8 residues coordinate ATP: G91, G93, R94, K114, D126, G127, R177, and R184. D253 (proton acceptor) is an active-site residue. The Mg(2+) site is built by N254 and D263. Residue D263 participates in ATP binding.

Belongs to the SELO family. It depends on Mg(2+) as a cofactor. Requires Mn(2+) as cofactor.

The catalysed reaction is L-seryl-[protein] + ATP = 3-O-(5'-adenylyl)-L-seryl-[protein] + diphosphate. It catalyses the reaction L-threonyl-[protein] + ATP = 3-O-(5'-adenylyl)-L-threonyl-[protein] + diphosphate. The enzyme catalyses L-tyrosyl-[protein] + ATP = O-(5'-adenylyl)-L-tyrosyl-[protein] + diphosphate. It carries out the reaction L-histidyl-[protein] + UTP = N(tele)-(5'-uridylyl)-L-histidyl-[protein] + diphosphate. The catalysed reaction is L-seryl-[protein] + UTP = O-(5'-uridylyl)-L-seryl-[protein] + diphosphate. It catalyses the reaction L-tyrosyl-[protein] + UTP = O-(5'-uridylyl)-L-tyrosyl-[protein] + diphosphate. Its function is as follows. Nucleotidyltransferase involved in the post-translational modification of proteins. It can catalyze the addition of adenosine monophosphate (AMP) or uridine monophosphate (UMP) to a protein, resulting in modifications known as AMPylation and UMPylation. The chain is Protein nucleotidyltransferase YdiU from Maridesulfovibrio salexigens (strain ATCC 14822 / DSM 2638 / NCIMB 8403 / VKM B-1763) (Desulfovibrio salexigens).